Reading from the N-terminus, the 537-residue chain is Phosphoenolpyruvate carboxykinase (ATP) (537 aa).

Substrate-binding residues include Arg-61, Tyr-194, and Lys-200. ATP is bound by residues Lys-200, His-219, and Gly-235–Thr-243. 2 residues coordinate Mn(2+): Lys-200 and His-219. Position 256 (Asp-256) interacts with Mn(2+). Positions 284, 322, and 448 each coordinate ATP. Arg-322 is a substrate binding site.

It belongs to the phosphoenolpyruvate carboxykinase (ATP) family. The cofactor is Mn(2+).

It is found in the cytoplasm. It catalyses the reaction oxaloacetate + ATP = phosphoenolpyruvate + ADP + CO2. The protein operates within carbohydrate biosynthesis; gluconeogenesis. Involved in the gluconeogenesis. Catalyzes the conversion of oxaloacetate (OAA) to phosphoenolpyruvate (PEP) through direct phosphoryl transfer between the nucleoside triphosphate and OAA. The protein is Phosphoenolpyruvate carboxykinase (ATP) of Bradyrhizobium sp. (strain BTAi1 / ATCC BAA-1182).